The following is a 378-amino-acid chain: Septin-5 (378 aa).

One can recognise a Septin-type G domain in the interval K50–Q323. The interval G60 to S67 is G1 motif. Residues G60–S67, T94, and G120 contribute to the GTP site. Positions D117–G120 are G3 motif. Residue R177 is modified to Omega-N-methylarginine. The G4 motif stretch occupies residues A198–D201. K199–E207 serves as a coordination point for GTP. S234 carries the post-translational modification Phosphoserine. G257 and R272 together coordinate GTP. Phosphoserine is present on S336. T345 is subject to Phosphothreonine. Residues D347 to Q378 adopt a coiled-coil conformation.

Belongs to the TRAFAC class TrmE-Era-EngA-EngB-Septin-like GTPase superfamily. Septin GTPase family. In terms of assembly, septins polymerize into heterooligomeric protein complexes that form filaments, and can associate with cellular membranes, actin filaments and microtubules. GTPase activity is required for filament formation. Interacts with SEPTIN2 and SEPTIN5. In platelets, associated with a complex containing STX4. Interacts with PRKN; this interaction leads to SEPTIN5 ubiquitination and degradation. Interacts with DYRK1A. Interacts with STX1A; in the cerebellar cortex. Phosphorylated by DYRK1A.

It localises to the cytoplasm. Its subcellular location is the cytoskeleton. Filament-forming cytoskeletal GTPase. May play a role in cytokinesis (Potential). May play a role in platelet secretion. The sequence is that of Septin-5 from Macaca fascicularis (Crab-eating macaque).